The primary structure comprises 688 residues: Glycine--tRNA ligase beta subunit (688 aa).

The protein belongs to the class-II aminoacyl-tRNA synthetase family. Tetramer of two alpha and two beta subunits.

The protein localises to the cytoplasm. The enzyme catalyses tRNA(Gly) + glycine + ATP = glycyl-tRNA(Gly) + AMP + diphosphate. This chain is Glycine--tRNA ligase beta subunit, found in Listeria monocytogenes serotype 4a (strain HCC23).